The following is a 748-amino-acid chain: Adenosylcobalamin-dependent ribonucleoside-triphosphate reductase (748 aa).

A disulfide bridge connects residues Cys-123 and Cys-426. The effector region-1 stretch occupies residues 151–162 (SMPYSFMFDELM). Residues 172–320 (TKDNIAKLPP…IGNLIGKTVV (149 aa)) form an effector region-2 region. Catalysis depends on residues Cys-415 and Glu-417. The tract at residues 572–633 (FHYAGYLIQR…DPAFASAGTV (62 aa)) is adenosylcobalamin-binding-1. The adenosylcobalamin-binding-2 stretch occupies residues 692–733 (FKQAPKEPIDVKTYKQKCAAIHGSVAAVFAVQNADHDQKDLE).

It belongs to the class II ribonucleoside-triphosphate reductase family. Monomer. It depends on adenosylcob(III)alamin as a cofactor.

It carries out the reaction a 2'-deoxyribonucleoside 5'-triphosphate + [thioredoxin]-disulfide + H2O = a ribonucleoside 5'-triphosphate + [thioredoxin]-dithiol. With respect to regulation, allosterically regulated by ATP and dNTP. The protein is Adenosylcobalamin-dependent ribonucleoside-triphosphate reductase (rtpR) of Lacticaseibacillus paracasei (strain ATCC 334 / BCRC 17002 / CCUG 31169 / CIP 107868 / KCTC 3260 / NRRL B-441) (Lactobacillus paracasei).